The sequence spans 232 residues: Ribose-5-phosphate isomerase A (232 aa).

Residues 31–34, 88–91, and 101–104 each bind substrate; these read TGST, DGAD, and KGGG. The active-site Proton acceptor is E110. Residue K128 participates in substrate binding.

It belongs to the ribose 5-phosphate isomerase family. As to quaternary structure, homodimer.

It catalyses the reaction aldehydo-D-ribose 5-phosphate = D-ribulose 5-phosphate. Its pathway is carbohydrate degradation; pentose phosphate pathway; D-ribose 5-phosphate from D-ribulose 5-phosphate (non-oxidative stage): step 1/1. Catalyzes the reversible conversion of ribose-5-phosphate to ribulose 5-phosphate. The protein is Ribose-5-phosphate isomerase A of Lactobacillus gasseri (strain ATCC 33323 / DSM 20243 / BCRC 14619 / CIP 102991 / JCM 1131 / KCTC 3163 / NCIMB 11718 / NCTC 13722 / AM63).